We begin with the raw amino-acid sequence, 158 residues long: RNA pyrophosphohydrolase (158 aa).

In terms of domain architecture, Nudix hydrolase spans 6–149 (GYRLNVGIVL…KRHVYRKVMK (144 aa)). The Nudix box motif lies at 38–59 (GGINIGETPEQAMYRELFEEIG).

This sequence belongs to the Nudix hydrolase family. RppH subfamily. A divalent metal cation is required as a cofactor.

Accelerates the degradation of transcripts by removing pyrophosphate from the 5'-end of triphosphorylated RNA, leading to a more labile monophosphorylated state that can stimulate subsequent ribonuclease cleavage. This is RNA pyrophosphohydrolase from Blochmanniella floridana.